Reading from the N-terminus, the 324-residue chain is tRNA pseudouridine synthase B (324 aa).

His43 provides a ligand contact to substrate. The active-site Nucleophile is Asp48. Substrate-binding residues include Tyr76, Tyr179, and Leu200.

The protein belongs to the pseudouridine synthase TruB family. Type 1 subfamily.

It carries out the reaction uridine(55) in tRNA = pseudouridine(55) in tRNA. Its function is as follows. Responsible for synthesis of pseudouridine from uracil-55 in the psi GC loop of transfer RNAs. The protein is tRNA pseudouridine synthase B of Yersinia pestis bv. Antiqua (strain Nepal516).